Here is a 320-residue protein sequence, read N- to C-terminus: Membrane protein insertase YidC 2 (320 aa).

An N-terminal signal peptide occupies residues 1 to 23 (MKNLKKKLTLTGLMTAGLLFLSG). Cys24 is lipidated: N-palmitoyl cysteine. A lipid anchor (S-diacylglycerol cysteine) is attached at Cys24. Helical transmembrane passes span 68–88 (YGWG…PLGL), 142–162 (MLSS…IALY), 178–198 (GIPL…LYFI), 217–237 (AMLI…PAGV), and 239–259 (LYWA…TFIM). Residues 270–320 (EFTKNPPKINNEGLKDVTPTSVQENFKEITSERNEKERKSGGRNAGKQNRK) form a disordered region. Residues 294-309 (NFKEITSERNEKERKS) show a composition bias toward basic and acidic residues.

The protein belongs to the OXA1/ALB3/YidC family. Type 2 subfamily.

The protein localises to the cell membrane. Its function is as follows. Required for the insertion and/or proper folding and/or complex formation of integral membrane proteins into the membrane. Involved in integration of membrane proteins that insert both dependently and independently of the Sec translocase complex, as well as at least some lipoproteins. This is Membrane protein insertase YidC 2 from Lactococcus lactis subsp. lactis (strain IL1403) (Streptococcus lactis).